A 305-amino-acid polypeptide reads, in one-letter code: Acetylglutamate kinase (305 aa).

Substrate-binding positions include 67–68, R89, and N190; that span reads GG.

It belongs to the acetylglutamate kinase family. ArgB subfamily.

It is found in the cytoplasm. It catalyses the reaction N-acetyl-L-glutamate + ATP = N-acetyl-L-glutamyl 5-phosphate + ADP. It participates in amino-acid biosynthesis; L-arginine biosynthesis; N(2)-acetyl-L-ornithine from L-glutamate: step 2/4. Functionally, catalyzes the ATP-dependent phosphorylation of N-acetyl-L-glutamate. The protein is Acetylglutamate kinase of Bifidobacterium longum (strain NCC 2705).